The sequence spans 423 residues: Deferrochelatase (423 aa).

Positions 1-35 form a signal peptide, tat-type signal; sequence MQYEDENGVNEPSRRRLLKGIGALALAGSCPVAHA. Residues 236-238, H329, 334-336, and R347 each bind heme b; these read GTA and NPR.

Belongs to the DyP-type peroxidase family. EfeB subfamily. Homodimer. Part of a ferrous iron transporter composed of EfeU, EfeO and EfeB. Heme b is required as a cofactor. Predicted to be exported by the Tat system. The position of the signal peptide cleavage has not been experimentally proven.

The protein resides in the periplasm. The catalysed reaction is heme b + 2 H(+) = protoporphyrin IX + Fe(2+). In terms of biological role, involved in the recovery of exogenous heme iron. Extracts iron from heme while preserving the protoporphyrin ring intact. This is Deferrochelatase (efeB) from Escherichia coli O6:K15:H31 (strain 536 / UPEC).